The chain runs to 499 residues: Potassium voltage-gated channel subfamily A member 2 (499 aa).

A disordered region spans residues 1–27 (MTVATGDLTDGSVGFAGHPQDSYDPEP). The tract at residues 1–125 (MTVATGDLTD…YELGEEAMEI (125 aa)) is tetramerization domain. Residues 1–160 (MTVATGDLTD…LLFEYPESSG (160 aa)) are Cytoplasmic-facing. The helical transmembrane segment at 161–182 (PARIIAIISVTVILISIVSFCL) threads the bilayer. The Extracellular segment spans residues 183–221 (ETLPVFRDENEDMHGSGGNYYSYPNSTVRFQKSNTFTDP). N-linked (GlcNAc...) asparagine glycosylation is present at Asn207. The chain crosses the membrane as a helical span at residues 222-243 (FFIVETLCIIWFSFEFLVRFLA). Residue Cys244 is the site of S-palmitoyl cysteine attachment. The Cytoplasmic portion of the chain corresponds to 244-254 (CPSKAVFFTNL). A helical membrane pass occupies residues 255–275 (MNIIDIVAIIPYFITLGTELA). Topologically, residues 276–289 (EKTEDGQQGQQAMS) are extracellular. Residues 290–310 (LAILRVIRLVRVFRIFKLSRH) form a helical; Voltage-sensor membrane-spanning segment. Topologically, residues 311–325 (SKGLQILGQTLNASM) are cytoplasmic. Positions 312-325 (KGLQILGQTLNASM) are S4-S5 linker. A helical membrane pass occupies residues 326–347 (RELGLLIFFLFIGVILFSSAVF). The Extracellular segment spans residues 348–361 (FAEADERDSQFPSI). The helical intramembrane region spans 362–373 (PDAFWWAVVSMT). The Selectivity filter signature appears at 374–379 (TVGYGD). Residues 374–381 (TVGYGDMV) lie within the membrane without spanning it. Residues 382-388 (PTTIGGK) are Extracellular-facing. The chain crosses the membrane as a helical span at residues 389-417 (IVGSLCAIAGVLTIALPVPVIVSNFNYFY). The Cytoplasmic portion of the chain corresponds to 418–499 (HRETEGEEQA…VNITKMLTDV (82 aa)). The PDZ-binding motif lies at 497–499 (TDV).

This sequence belongs to the potassium channel family. A (Shaker) (TC 1.A.1.2) subfamily. Kv1.2/KCNA2 sub-subfamily. Homotetramer and heterotetramer with other family members. Detected in tadpole brain and spinal cord.

It is found in the cell membrane. It carries out the reaction K(+)(in) = K(+)(out). Voltage-gated potassium channel that mediates transmembrane potassium transport in excitable membranes, primarily in the brain and central nervous system. Prevents aberrant action potential firing and regulates neuronal output. Forms tetrameric potassium-selective channels through which potassium ions pass in accordance with their electrochemical gradient. The channel alternates between opened and closed conformations in response to the voltage difference across the membrane. Can form functional homotetrameric channels and heterotetrameric channels with other family members; the channels characteristics depend critically on the types of channel-forming alpha subunits that are present. Channel properties are modulated by cytoplasmic beta subunits that regulate the subcellular location of the alpha subunits. In vivo, membranes probably contain a mixture of heteromeric potassium channel complexes, making it difficult to assign currents observed in intact tissues to any particular potassium channel family member. Homotetrameric KCNA2 forms a delayed-rectifier potassium channel that opens in response to membrane depolarization, followed by slow spontaneous channel closure. Regulates neuronal excitability and plays a role as pacemaker in the regulation of neuronal action potentials. KCNA2-containing channels play a presynaptic role and prevent hyperexcitability and aberrant action potential firing. Response to toxins that are selective for KCNA2-containing potassium channels suggests that in Purkinje cells, dendritic subthreshold KCNA2-containing potassium channels prevent random spontaneous calcium spikes, suppressing dendritic hyperexcitability without hindering the generation of somatic action potentials, and thereby play an important role in motor coordination. Plays a role in the induction of long-term potentiation of neuron excitability in the CA3 layer of the hippocampus. The chain is Potassium voltage-gated channel subfamily A member 2 (kcna2) from Xenopus laevis (African clawed frog).